Reading from the N-terminus, the 244-residue chain is Putative esophageal gland cell secretory protein 6 (244 aa).

A signal peptide spans 1 to 22 (MDRRFTVFLVIALVTSIYEVLS). Cysteine 88 and cysteine 91 are oxidised to a cystine.

It belongs to the SelWTH family. SELT subfamily.

In Heterodera glycines (Soybean cyst nematode worm), this protein is Putative esophageal gland cell secretory protein 6 (HSP6).